We begin with the raw amino-acid sequence, 105 residues long: Large ribosomal subunit protein uL23 (105 aa).

It belongs to the universal ribosomal protein uL23 family. As to quaternary structure, part of the 50S ribosomal subunit. Contacts protein L29, and trigger factor when it is bound to the ribosome.

One of the early assembly proteins it binds 23S rRNA. One of the proteins that surrounds the polypeptide exit tunnel on the outside of the ribosome. Forms the main docking site for trigger factor binding to the ribosome. This Ureaplasma parvum serovar 3 (strain ATCC 27815 / 27 / NCTC 11736) protein is Large ribosomal subunit protein uL23.